The primary structure comprises 216 residues: Protein Syd (216 aa).

The protein belongs to the Syd family.

Its subcellular location is the cell inner membrane. Interacts with the SecY protein in vivo. May bind preferentially to an uncomplexed state of SecY, thus functioning either as a chelating agent for excess SecY in the cell or as a regulatory factor that negatively controls the translocase function. This Shewanella putrefaciens (strain CN-32 / ATCC BAA-453) protein is Protein Syd.